Here is a 210-residue protein sequence, read N- to C-terminus: Orotate phosphoribosyltransferase (210 aa).

5-phospho-alpha-D-ribose 1-diphosphate contacts are provided by residues Arg97, Lys101, His103, and 123–131 (EDLISTGGS). Ser127 lines the orotate pocket.

The protein belongs to the purine/pyrimidine phosphoribosyltransferase family. PyrE subfamily. As to quaternary structure, homodimer. Mg(2+) is required as a cofactor.

The enzyme catalyses orotidine 5'-phosphate + diphosphate = orotate + 5-phospho-alpha-D-ribose 1-diphosphate. The protein operates within pyrimidine metabolism; UMP biosynthesis via de novo pathway; UMP from orotate: step 1/2. Functionally, catalyzes the transfer of a ribosyl phosphate group from 5-phosphoribose 1-diphosphate to orotate, leading to the formation of orotidine monophosphate (OMP). The protein is Orotate phosphoribosyltransferase of Enterococcus faecalis (strain ATCC 700802 / V583).